A 440-amino-acid chain; its full sequence is Adenosylhomocysteinase (440 aa).

Substrate-binding residues include threonine 64, aspartate 139, and glutamate 164. 165–167 (TTT) lines the NAD(+) pocket. Substrate contacts are provided by lysine 194 and aspartate 198. Residues asparagine 199, 228–233 (GFGDVG), glutamate 251, asparagine 286, 307–309 (IGH), and asparagine 352 each bind NAD(+).

It belongs to the adenosylhomocysteinase family. NAD(+) is required as a cofactor.

It localises to the cytoplasm. It catalyses the reaction S-adenosyl-L-homocysteine + H2O = L-homocysteine + adenosine. It participates in amino-acid biosynthesis; L-homocysteine biosynthesis; L-homocysteine from S-adenosyl-L-homocysteine: step 1/1. Functionally, may play a key role in the regulation of the intracellular concentration of adenosylhomocysteine. This Granulibacter bethesdensis (strain ATCC BAA-1260 / CGDNIH1) protein is Adenosylhomocysteinase.